The sequence spans 331 residues: L-lactate dehydrogenase A chain (331 aa).

Residues 29–57 and Arg98 contribute to the NAD(+) site; that span reads GMVG…MEDK. Residues Arg105, Asn137, and Arg168 each contribute to the substrate site. Asn137 contributes to the NAD(+) binding site. His192 (proton acceptor) is an active-site residue. Thr247 serves as a coordination point for substrate.

This sequence belongs to the LDH/MDH superfamily. LDH family. As to quaternary structure, homotetramer.

Its subcellular location is the cytoplasm. It carries out the reaction (S)-lactate + NAD(+) = pyruvate + NADH + H(+). It functions in the pathway fermentation; pyruvate fermentation to lactate; (S)-lactate from pyruvate: step 1/1. Interconverts simultaneously and stereospecifically pyruvate and lactate with concomitant interconversion of NADH and NAD(+). The protein is L-lactate dehydrogenase A chain (ldha) of Dissostichus eleginoides (Patagonian toothfish).